Reading from the N-terminus, the 142-residue chain is Hemoglobin subunit alpha (142 aa).

The Globin domain maps to 2–142 (VLSAADKTNV…LSTVLTSKYR (141 aa)). A Phosphoserine modification is found at Ser-4. Lys-8 is subject to N6-succinyllysine. Thr-9 bears the Phosphothreonine mark. Lys-12 carries the N6-succinyllysine modification. The residue at position 17 (Lys-17) is an N6-acetyllysine; alternate. Lys-17 bears the N6-succinyllysine; alternate mark. Tyr-25 bears the Phosphotyrosine mark. Residue Ser-36 is modified to Phosphoserine. Lys-41 carries the N6-succinyllysine modification. Residue Ser-50 is modified to Phosphoserine. An O2-binding site is contributed by Gln-59. His-88 is a binding site for heme b. Thr-109 carries the post-translational modification Phosphothreonine. Residue Ser-125 is modified to Phosphoserine. Phosphothreonine is present on residues Thr-135 and Thr-138. Ser-139 carries the phosphoserine modification.

The protein belongs to the globin family. As to quaternary structure, heterotetramer of two alpha chains and two beta chains. Red blood cells.

In terms of biological role, involved in oxygen transport from the lung to the various peripheral tissues. Hemopressin acts as an antagonist peptide of the cannabinoid receptor CNR1. Hemopressin-binding efficiently blocks cannabinoid receptor CNR1 and subsequent signaling. The polypeptide is Hemoglobin subunit alpha (HBA) (Monodelphis domestica (Gray short-tailed opossum)).